The following is a 509-amino-acid chain: 3-ketoacyl-CoA synthase 11 (509 aa).

The next 2 helical transmembrane spans lie at 36-56 (LITHGMYLFLSPLVLVIAAQI) and 75-95 (LISVVVCSMLLVFLMTIYFMT). The FAE domain maps to 92–381 (YFMTRPRPVY…FFATLVGRKL (290 aa)). Catalysis depends on residues Cys-236, His-315, His-399, His-403, and Asn-436.

This sequence belongs to the thiolase-like superfamily. Chalcone/stilbene synthases family. Only expressed in guard cells. Expressed in siliques, flowers, leaves, stems, roots and seedlings.

It localises to the membrane. It catalyses the reaction a very-long-chain acyl-CoA + malonyl-CoA + H(+) = a very-long-chain 3-oxoacyl-CoA + CO2 + CoA. It functions in the pathway lipid metabolism; fatty acid biosynthesis. Functionally, active on both saturated and mono-unsaturated acyl chains C16 to C20. This Arabidopsis thaliana (Mouse-ear cress) protein is 3-ketoacyl-CoA synthase 11.